The chain runs to 3387 residues: Genome polyprotein (3387 aa).

Residues 1-100 lie on the Cytoplasmic side of the membrane; it reads MNQRKKVVRP…LNILNGRKRS (100 aa). The segment at 36–71 is hydrophobic; homodimerization of capsid protein C; it reads LFSGKGPLRMVLAFITFLRVLSIPPTAGILKRWGQL. Residues 100–113 constitute a propeptide, ER anchor for the capsid protein C, removed in mature form by serine protease NS3; it reads STITLLCLIPTVMA. The chain crosses the membrane as a helical span at residues 101 to 117; that stretch reads TITLLCLIPTVMAFSLS. At 118-237 the chain is on the extracellular side; sequence TRDGEPLMIV…GAWKHAQRVE (120 aa). N-linked (GlcNAc...) asparagine; by host glycosylation occurs at asparagine 182. A helical membrane pass occupies residues 238–258; the sequence is SWILRNPGFALLAGFMAYMIG. Residues 259–265 are Cytoplasmic-facing; that stretch reads QTGIQRT. Residues 266–279 form a helical membrane-spanning segment; sequence VFFVLMMLVAPSYG. Residues 280-725 lie on the Extracellular side of the membrane; that stretch reads MRCVGVGNRD…HQVFGSVYTT (446 aa). Disulfide bonds link cysteine 282–cysteine 309, cysteine 339–cysteine 400, cysteine 353–cysteine 384, and cysteine 371–cysteine 395. Asparagine 346 carries an N-linked (GlcNAc...) asparagine; by host glycan. The tract at residues 377-390 is fusion peptide; that stretch reads DRGWGNGCGLFGKG. Asparagine 432 carries an N-linked (GlcNAc...) asparagine; by host glycan. 2 disulfide bridges follow: cysteine 464–cysteine 564 and cysteine 581–cysteine 612. A helical transmembrane segment spans residues 726 to 746; that stretch reads MFGGVSWMIRILIGFLVLWIG. Residues 747-751 are Cytoplasmic-facing; it reads TNSRN. A helical membrane pass occupies residues 752-772; it reads TSMAMTCIAVGGITLFLGFTV. Topologically, residues 773-1194 are extracellular; the sequence is QADMGCVASW…MLGDTMSGRI (422 aa). Disulfide bonds link cysteine 778-cysteine 789, cysteine 829-cysteine 917, cysteine 953-cysteine 997, cysteine 1054-cysteine 1103, cysteine 1065-cysteine 1087, and cysteine 1086-cysteine 1090. N-linked (GlcNAc...) asparagine; by host glycosylation is found at asparagine 904 and asparagine 981. A helical transmembrane segment spans residues 1195 to 1218; it reads GGQIHLAIMAVFKMSPGYVLGVFL. Residues 1219 to 1224 lie on the Lumenal side of the membrane; the sequence is RKLTSR. A helical transmembrane segment spans residues 1225–1243; that stretch reads ETALMVIGMAMTTVLSIPH. Residues 1244–1267 are Cytoplasmic-facing; it reads DLMELIDGISLGLILLKIVTQFDN. Residues 1268–1288 form a helical membrane-spanning segment; it reads TQVGTLALSLTFIRSTMPLVM. Residue alanine 1289 is a topological domain, lumenal. A helical membrane pass occupies residues 1290-1308; that stretch reads WRTIMAVLFVVTLIPLCRT. The Lumenal segment spans residues 1309-1316; that stretch reads SCLQKQSH. The chain crosses the membrane as a helical span at residues 1317–1337; it reads WVEITALILGAQALPVYLMTL. The Cytoplasmic segment spans residues 1338-1345; sequence MKGASRRS. A helical membrane pass occupies residues 1346–1366; the sequence is WPLNEGIMAVGLVSLLGSALL. The Lumenal portion of the chain corresponds to 1367-1369; the sequence is KND. Residues 1370-1390 form a helical membrane-spanning segment; the sequence is VPLAGPMVAGGLLLAAYVMSG. Over 1391 to 1437 the chain is Cytoplasmic; sequence SSADLSLEKAANVQWDEMADITGSSPIIEVKQDEDGSFSIRDVEETN. An interacts with and activates NS3 protease region spans residues 1397–1436; that stretch reads LEKAANVQWDEMADITGSSPIIEVKQDEDGSFSIRDVEET. Positions 1438-1458 form an intramembrane region, helical; it reads MITLLVKLALITVSGLYPLAI. The Cytoplasmic segment spans residues 1459–2143; the sequence is PVTMTLWYMW…QHALNELPES (685 aa). A Peptidase S7 domain is found at 1475 to 1652; it reads SGALWDVPSP…ERIGEPDYEV (178 aa). Residues histidine 1525, aspartate 1549, and serine 1609 each act as charge relay system; for serine protease NS3 activity in the active site. In terms of domain architecture, Helicase ATP-binding spans 1654 to 1810; the sequence is EDIFRKKRLT…QSNSPIEDIE (157 aa). The tract at residues 1658–1661 is important for RNA-binding; sequence RKKR. 1667-1674 lines the ATP pocket; that stretch reads LHPGAGKT. The DEAH box signature appears at 1758-1761; that stretch reads DEAH. The Helicase C-terminal domain maps to 1820-1987; it reads TGFDWITDYQ…IIPTLFGPER (168 aa). Residue lysine 1862 is modified to N6-acetyllysine; by host. A helical membrane pass occupies residues 2144 to 2164; sequence LETLMLVALLGAMTAGIFLFF. The Lumenal segment spans residues 2165–2169; the sequence is MQGKG. The segment at residues 2170–2190 is an intramembrane region (helical); the sequence is IGKLSMGLITIAVASGLLWVA. A topological domain (lumenal) is located at residue glutamate 2191. Residues 2192-2212 traverse the membrane as a helical segment; sequence IQPQWIAASIILEFFLMVLLI. Residues 2213–2225 are Cytoplasmic-facing; sequence PEPEKQRTPQDNQ. A helical transmembrane segment spans residues 2226-2246; sequence LIYVILTILTIIGLIAANEMG. The Lumenal segment spans residues 2247–2270; it reads LIEKTKTDFGFYQVKTETTILDVD. Residues 2271–2291 constitute an intramembrane region (helical); sequence LRPASAWTLYAVATTILTPML. At 2292-2301 the chain is on the lumenal side; that stretch reads RHTIENTSAN. Asparagine 2297 and asparagine 2301 each carry an N-linked (GlcNAc...) asparagine; by host glycan. Positions 2302–2322 form an intramembrane region, helical; the sequence is LSLAAIANQAAVLMGLGKGWP. At 2323–2343 the chain is on the lumenal side; that stretch reads LHRMDLGVPLLAMGCYSQVNP. The helical transmembrane segment at 2344-2364 threads the bilayer; it reads TTLTASLVMLLVHYAIIGPGL. The Cytoplasmic segment spans residues 2365–2409; the sequence is QAKATREAQKRTAAGIMKNPTVDGITVIDLEPISYDPKFEKQLGQ. Residues 2410–2430 form a helical membrane-spanning segment; the sequence is VMLLVLCAGQLLLMRTTWAFC. The Lumenal portion of the chain corresponds to 2431 to 2455; sequence EVLTLATGPILTLWEGNPGRFWNTT. A glycan (N-linked (GlcNAc...) asparagine; by host) is linked at asparagine 2453. The chain crosses the membrane as a helical span at residues 2456–2476; sequence IAVSTANIFRGSYLAGAGLAF. At 2477–3387 the chain is on the cytoplasmic side; that stretch reads SLIKNAQTPR…SAPSESEGVL (911 aa). Residues 2489–2751 enclose the mRNA cap 0-1 NS5-type MT domain; sequence TGTTGETLGE…DVDLGAGTRS (263 aa). Serine 2543 serves as a coordination point for S-adenosyl-L-methionine. The residue at position 2543 (serine 2543) is a Phosphoserine. The active-site For 2'-O-MTase activity is lysine 2548. Positions 2564-2567 match the SUMO-interacting motif motif; sequence VVDL. The S-adenosyl-L-methionine site is built by glycine 2573, tryptophan 2574, threonine 2591, lysine 2592, aspartate 2618, and valine 2619. Catalysis depends on aspartate 2633, which acts as the For 2'-O-MTase activity. Isoleucine 2634 contributes to the S-adenosyl-L-methionine binding site. Catalysis depends on for 2'-O-MTase activity residues lysine 2668 and glutamate 2704. Position 2706 (tyrosine 2706) interacts with S-adenosyl-L-methionine. Residues glutamate 2925, histidine 2929, cysteine 2934, and cysteine 2937 each contribute to the Zn(2+) site. Residues 3016-3166 form the RdRp catalytic domain; that stretch reads LMYADDTAGW…PLDERFGTSL (151 aa). Zn(2+) is bound by residues histidine 3200, cysteine 3216, and cysteine 3335.

In the N-terminal section; belongs to the class I-like SAM-binding methyltransferase superfamily. mRNA cap 0-1 NS5-type methyltransferase family. Homodimer. Interacts (via N-terminus) with host EXOC1 (via C-terminus); this interaction results in EXOC1 degradation through the proteasome degradation pathway. As to quaternary structure, forms heterodimers with envelope protein E in the endoplasmic reticulum and Golgi. In terms of assembly, homodimer; in the endoplasmic reticulum and Golgi. Interacts with protein prM. Interacts with non-structural protein 1. Homodimer; Homohexamer when secreted. Interacts with envelope protein E. As to quaternary structure, interacts (via N-terminus) with serine protease NS3. In terms of assembly, forms a heterodimer with serine protease NS3. May form homooligomers. Forms a heterodimer with NS2B. Interacts with NS4B. Interacts with unphosphorylated RNA-directed RNA polymerase NS5; this interaction stimulates RNA-directed RNA polymerase NS5 guanylyltransferase activity. Interacts with host SHFL. As to quaternary structure, interacts with host MAVS; this interaction inhibits the synthesis of IFN-beta. Interacts with host SHFL. Interacts with host AUP1; the interaction occurs in the presence of Dengue virus NS4B and induces lipophagy which facilitates production of virus progeny particles. In terms of assembly, interacts with serine protease NS3. Homodimer. Interacts with host STAT2; this interaction inhibits the phosphorylation of the latter, and, when all viral proteins are present (polyprotein), targets STAT2 for degradation. Interacts with serine protease NS3. Interacts with host PAF1 complex; the interaction may prevent the recruitment of the PAF1 complex to interferon-responsive genes, and thus reduces the immune response. In terms of processing, specific enzymatic cleavages in vivo yield mature proteins. Cleavages in the lumen of endoplasmic reticulum are performed by host signal peptidase, whereas cleavages in the cytoplasmic side are performed by serine protease NS3. Signal cleavage at the 2K-4B site requires a prior NS3 protease-mediated cleavage at the 4A-2K site. Cleaved in post-Golgi vesicles by a host furin, releasing the mature small envelope protein M, and peptide pr. This cleavage is incomplete as up to 30% of viral particles still carry uncleaved prM. Post-translationally, N-glycosylated. In terms of processing, N-glycosylated. The excreted form is glycosylated and this is required for efficient secretion of the protein from infected cells. Acetylated by host KAT5. Acetylation modulates NS3 RNA-binding and unwinding activities and plays an important positive role for viral replication. Post-translationally, sumoylation of RNA-directed RNA polymerase NS5 increases NS5 protein stability allowing proper viral RNA replication. In terms of processing, phosphorylated on serines residues. This phosphorylation may trigger NS5 nuclear localization.

It is found in the virion. The protein resides in the host nucleus. The protein localises to the host cytoplasm. Its subcellular location is the host perinuclear region. It localises to the secreted. It is found in the virion membrane. The protein resides in the host endoplasmic reticulum membrane. The protein localises to the host mitochondrion. It carries out the reaction Selective hydrolysis of -Xaa-Xaa-|-Yaa- bonds in which each of the Xaa can be either Arg or Lys and Yaa can be either Ser or Ala.. It catalyses the reaction RNA(n) + a ribonucleoside 5'-triphosphate = RNA(n+1) + diphosphate. The enzyme catalyses a ribonucleoside 5'-triphosphate + H2O = a ribonucleoside 5'-diphosphate + phosphate + H(+). The catalysed reaction is ATP + H2O = ADP + phosphate + H(+). It carries out the reaction a 5'-end (5'-triphosphoguanosine)-ribonucleoside in mRNA + S-adenosyl-L-methionine = a 5'-end (N(7)-methyl 5'-triphosphoguanosine)-ribonucleoside in mRNA + S-adenosyl-L-homocysteine. It catalyses the reaction a 5'-end (N(7)-methyl 5'-triphosphoguanosine)-ribonucleoside in mRNA + S-adenosyl-L-methionine = a 5'-end (N(7)-methyl 5'-triphosphoguanosine)-(2'-O-methyl-ribonucleoside) in mRNA + S-adenosyl-L-homocysteine + H(+). Its function is as follows. Plays a role in virus budding by binding to the cell membrane and gathering the viral RNA into a nucleocapsid that forms the core of a mature virus particle. During virus entry, may induce genome penetration into the host cytoplasm after hemifusion induced by the surface proteins. Can migrate to the cell nucleus where it modulates host functions. Overcomes the anti-viral effects of host EXOC1 by sequestering and degrading the latter through the proteasome degradation pathway. In terms of biological role, regulates the ATPase activity of the NS3 helicase activity. NS4A allows NS3 helicase to conserve energy during unwinding. Plays a role in the inhibition of the host innate immune response. Interacts with host MAVS and thereby prevents the interaction between RIGI and MAVS. In turn, IFN-beta production is impaired. Interacts with host AUP1 which mediates induction of lipophagy in host cells and facilitates production of virus progeny particles. Functionally, inhibits RNA silencing by interfering with host Dicer. Prevents premature fusion activity of envelope proteins in trans-Golgi by binding to envelope protein E at pH6.0. After virion release in extracellular space, gets dissociated from E dimers. Its function is as follows. Acts as a chaperone for envelope protein E during intracellular virion assembly by masking and inactivating envelope protein E fusion peptide. prM is the only viral peptide matured by host furin in the trans-Golgi network probably to avoid catastrophic activation of the viral fusion activity in acidic Golgi compartment prior to virion release. prM-E cleavage is inefficient, and many virions are only partially matured. These uncleaved prM would play a role in immune evasion. In terms of biological role, may play a role in virus budding. Exerts cytotoxic effects by activating a mitochondrial apoptotic pathway through M ectodomain. May display a viroporin activity. Functionally, binds to host cell surface receptor and mediates fusion between viral and cellular membranes. Envelope protein is synthesized in the endoplasmic reticulum in the form of heterodimer with protein prM. They play a role in virion budding in the ER, and the newly formed immature particle is covered with 60 spikes composed of heterodimer between precursor prM and envelope protein E. The virion is transported to the Golgi apparatus where the low pH causes dissociation of PrM-E heterodimers and formation of E homodimers. prM-E cleavage is inefficient, and many virions are only partially matured. These uncleaved prM would play a role in immune evasion. Involved in immune evasion, pathogenesis and viral replication. Once cleaved off the polyprotein, is targeted to three destinations: the viral replication cycle, the plasma membrane and the extracellular compartment. Essential for viral replication. Required for formation of the replication complex and recruitment of other non-structural proteins to the ER-derived membrane structures. Excreted as a hexameric lipoparticle that plays a role against host immune response. Antagonizing the complement function. Binds to the host macrophages and dendritic cells. Inhibits signal transduction originating from Toll-like receptor 3 (TLR3). Its function is as follows. Disrupts the host endothelial glycocalyx layer of host pulmonary microvascular endothelial cells, inducing degradation of sialic acid and shedding of heparan sulfate proteoglycans. NS1 induces expression of sialidases, heparanase, and activates cathepsin L, which activates heparanase via enzymatic cleavage. These effects are probably linked to the endothelial hyperpermeability observed in severe dengue disease. In terms of biological role, component of the viral RNA replication complex that functions in virion assembly and antagonizes the host immune response. Functionally, required cofactor for the serine protease function of NS3. May have membrane-destabilizing activity and form viroporins. Displays three enzymatic activities: serine protease, NTPase and RNA helicase. NS3 serine protease, in association with NS2B, performs its autocleavage and cleaves the polyprotein at dibasic sites in the cytoplasm: C-prM, NS2A-NS2B, NS2B-NS3, NS3-NS4A, NS4A-2K and NS4B-NS5. NS3 RNA helicase binds RNA and unwinds dsRNA in the 3' to 5' direction. Its function is as follows. Functions as a signal peptide for NS4B and is required for the interferon antagonism activity of the latter. In terms of biological role, induces the formation of ER-derived membrane vesicles where the viral replication takes place. Inhibits interferon (IFN)-induced host STAT1 phosphorylation and nuclear translocation, thereby preventing the establishment of cellular antiviral state by blocking the IFN-alpha/beta pathway. Functionally, replicates the viral (+) and (-) RNA genome, and performs the capping of genomes in the cytoplasm. NS5 methylates viral RNA cap at guanine N-7 and ribose 2'-O positions. Besides its role in RNA genome replication, also prevents the establishment of cellular antiviral state by blocking the interferon-alpha/beta (IFN-alpha/beta) signaling pathway. Inhibits host TYK2 and STAT2 phosphorylation, thereby preventing activation of JAK-STAT signaling pathway. May reduce immune responses by preventing the recruitment of the host PAF1 complex to interferon-responsive genes. The sequence is that of Genome polyprotein from Dengue virus type 4 (strain Dominica/814669/1981) (DENV-4).